A 215-amino-acid chain; its full sequence is Adenylyl-sulfate kinase (215 aa).

Residue 46-53 (GLSGAGKS) participates in ATP binding. Serine 120 acts as the Phosphoserine intermediate in catalysis.

The protein belongs to the APS kinase family.

It carries out the reaction adenosine 5'-phosphosulfate + ATP = 3'-phosphoadenylyl sulfate + ADP + H(+). It participates in sulfur metabolism; hydrogen sulfide biosynthesis; sulfite from sulfate: step 2/3. Functionally, catalyzes the synthesis of activated sulfate. The protein is Adenylyl-sulfate kinase (cysC) of Vibrio cholerae serotype O1 (strain ATCC 39315 / El Tor Inaba N16961).